Reading from the N-terminus, the 132-residue chain is Arginine decarboxylase proenzyme (132 aa).

The active-site Schiff-base intermediate with substrate; via pyruvic acid is S70. S70 carries the pyruvic acid (Ser); by autocatalysis modification. H75 (proton acceptor; for processing activity) is an active-site residue. Catalysis depends on C90, which acts as the Proton donor; for catalytic activity.

The protein belongs to the prokaryotic AdoMetDC family. Type 1 subfamily. As to quaternary structure, heterooctamer of four alpha and four beta chains arranged as a tetramer of alpha/beta heterodimers. Requires pyruvate as cofactor. Is synthesized initially as an inactive proenzyme. Formation of the active enzyme involves a self-maturation process in which the active site pyruvoyl group is generated from an internal serine residue via an autocatalytic post-translational modification. Two non-identical subunits are generated from the proenzyme in this reaction, and the pyruvate is formed at the N-terminus of the alpha chain, which is derived from the carboxyl end of the proenzyme. The post-translation cleavage follows an unusual pathway, termed non-hydrolytic serinolysis, in which the side chain hydroxyl group of the serine supplies its oxygen atom to form the C-terminus of the beta chain, while the remainder of the serine residue undergoes an oxidative deamination to produce ammonia and the pyruvoyl group blocking the N-terminus of the alpha chain.

The catalysed reaction is L-arginine + H(+) = agmatine + CO2. It participates in amine and polyamine biosynthesis; agmatine biosynthesis; agmatine from L-arginine: step 1/1. In terms of biological role, specifically catalyzes the decarboxylation of L-arginine to agmatine. Has no S-adenosylmethionine decarboxylase (AdoMetDC) activity. This chain is Arginine decarboxylase proenzyme, found in Aeropyrum pernix (strain ATCC 700893 / DSM 11879 / JCM 9820 / NBRC 100138 / K1).